Here is a 1413-residue protein sequence, read N- to C-terminus: DNA-directed RNA polymerase subunit beta' (1413 aa).

Residues Cys-70, Cys-72, Cys-85, and Cys-88 each contribute to the Zn(2+) site. Mg(2+)-binding residues include Asp-460, Asp-462, and Asp-464. 4 residues coordinate Zn(2+): Cys-814, Cys-888, Cys-895, and Cys-898.

The protein belongs to the RNA polymerase beta' chain family. As to quaternary structure, the RNAP catalytic core consists of 2 alpha, 1 beta, 1 beta' and 1 omega subunit. When a sigma factor is associated with the core the holoenzyme is formed, which can initiate transcription. Mg(2+) serves as cofactor. It depends on Zn(2+) as a cofactor.

It catalyses the reaction RNA(n) + a ribonucleoside 5'-triphosphate = RNA(n+1) + diphosphate. In terms of biological role, DNA-dependent RNA polymerase catalyzes the transcription of DNA into RNA using the four ribonucleoside triphosphates as substrates. This Buchnera aphidicola subsp. Schizaphis graminum (strain Sg) protein is DNA-directed RNA polymerase subunit beta'.